The following is a 1148-amino-acid chain: Transcription-repair-coupling factor (1148 aa).

A Helicase ATP-binding domain is found at 615–776; that stretch reads DMCQPLAMDR…MSGMRDLSII (162 aa). An ATP-binding site is contributed by 628-635; the sequence is GDVGFGKT. Positions 729-732 match the DEEH box motif; it reads DEEH. Residues 798 to 951 form the Helicase C-terminal domain; it reads VREAILREIL…GFALATHDLE (154 aa).

It in the N-terminal section; belongs to the UvrB family. In the C-terminal section; belongs to the helicase family. RecG subfamily. Monomer. Interacts with UvrA and RNAP.

The protein resides in the cytoplasm. Couples transcription and DNA repair by recognizing RNA polymerase (RNAP) stalled at DNA lesions. Mediates ATP-dependent release of RNAP and its truncated transcript from the DNA, and recruitment of nucleotide excision repair machinery to the damaged site. Can also dissociate RNAP that is blocked by low concentration of nucleoside triphosphates or by physical obstruction, such as bound proteins. In addition, can rescue arrested complexes by promoting forward translocation. Has ATPase activity, which is required for removal of stalled RNAP, but seems to lack helicase activity. May act through a translocase activity that rewinds upstream DNA, leading either to translocation or to release of RNAP when the enzyme active site cannot continue elongation. The protein is Transcription-repair-coupling factor of Escherichia coli (strain K12).